We begin with the raw amino-acid sequence, 372 residues long: MFLTNLTLTNYRNYEYETLNFGEGVNVILGENAQGKTNMMEAIYVLAMAKSHRTSNDKDLIRWNEEYAKIEGRAEKRSGSLTLELLISKKGKKARCNHIEQQRLSQYVGHLNVVMFAPEDLNLVKGSPQVRRRFVDMEIGQVSPVYIHDLSQYQKLLQQRNHYLKMMQARERSDEAVLDVLTEQLVLLAAKITLRRRQFLSLLEQWAMPIHYEISRGAEQLCIRYEPSVDVSEKAELSRIVEAYSETFAAMREREVQRGTTLVGPHRDDIAFFVNGKNVQTFGSQGQQRTTALAVKLAELELIFSELGDYPILLLDDVLSELDDFRQTHLLDAIRKKVQTFVTTTSIDGIKHDIIQEAAIYRVHSGSVTAPS.

30-37 (GENAQGKT) contacts ATP.

The protein belongs to the RecF family.

The protein localises to the cytoplasm. In terms of biological role, the RecF protein is involved in DNA metabolism; it is required for DNA replication and normal SOS inducibility. RecF binds preferentially to single-stranded, linear DNA. It also seems to bind ATP. In Geobacillus kaustophilus (strain HTA426), this protein is DNA replication and repair protein RecF.